The chain runs to 375 residues: Actin, cytoplasmic (375 aa).

The protein belongs to the actin family.

It is found in the cytoplasm. Its subcellular location is the cytoskeleton. It catalyses the reaction ATP + H2O = ADP + phosphate + H(+). In terms of biological role, actins are highly conserved proteins that are involved in various types of cell motility and are ubiquitously expressed in all eukaryotic cells. The chain is Actin, cytoplasmic from Oxytricha trifallax (Sterkiella histriomuscorum).